We begin with the raw amino-acid sequence, 259 residues long: Haloacid dehalogenase-like hydrolase domain-containing protein 2 (259 aa).

D13 and S15 together coordinate Mg(2+). Substrate-binding positions include 13–15 (DLS) and 46–47 (TN). Residues 47 to 71 (NTTKESKQDLLERLRKLEFDISEDE) are a coiled coil. Position 50 is an N6-succinyllysine (K50). K179 serves as a coordination point for substrate. D204 contributes to the Mg(2+) binding site.

It belongs to the HAD-like hydrolase superfamily. It depends on Mg(2+) as a cofactor.

This is Haloacid dehalogenase-like hydrolase domain-containing protein 2 (HDHD2) from Pongo abelii (Sumatran orangutan).